Consider the following 352-residue polypeptide: Phosphoribosylformylglycinamidine cyclo-ligase (352 aa).

The protein belongs to the AIR synthase family.

It localises to the cytoplasm. It carries out the reaction 2-formamido-N(1)-(5-O-phospho-beta-D-ribosyl)acetamidine + ATP = 5-amino-1-(5-phospho-beta-D-ribosyl)imidazole + ADP + phosphate + H(+). The protein operates within purine metabolism; IMP biosynthesis via de novo pathway; 5-amino-1-(5-phospho-D-ribosyl)imidazole from N(2)-formyl-N(1)-(5-phospho-D-ribosyl)glycinamide: step 2/2. The protein is Phosphoribosylformylglycinamidine cyclo-ligase of Pseudomonas savastanoi pv. phaseolicola (strain 1448A / Race 6) (Pseudomonas syringae pv. phaseolicola (strain 1448A / Race 6)).